We begin with the raw amino-acid sequence, 643 residues long: Aspartic protease 3 (643 aa).

Residues 1–31 (MEGRTTAGRATPAGFWLFSCCLASVLWSANA) form the signal peptide. Over residues 87-99 (APEVSGAAGASAS) the composition is skewed to low complexity. The tract at residues 87–116 (APEVSGAAGASASKTSEKPIRPYHTGPSSR) is disordered. Residues 281 to 600 (YVGVIGIGTP…GTRPSLVGIA (320 aa)) form the Peptidase A1 domain. Catalysis depends on residues Asp-299 and Asp-490.

The protein belongs to the peptidase A1 family.

The protein localises to the endomembrane system. With respect to regulation, inhibited by 49c, a hydroxyethylamine scaffold-based compound. In terms of biological role, required for the processing-mediated maturation of a subset of microneme proteins, such as MIC6, and rhoptry proteins, such as ROP1. By regulating microneme and rhoptry processing, plays an essential role in the lysis of the host cell membrane during egress and in rhoptry content discharge, which is required for invasion of host cells. This is Aspartic protease 3 from Toxoplasma gondii.